Here is a 154-residue protein sequence, read N- to C-terminus: Transcriptional repressor NrdR (154 aa).

A zinc finger spans residues 3-34 (CPFCGANDTKVIDSRLVAEGEQVRRRRECVAC). The ATP-cone domain occupies 49–139 (PRLIKQDGTR…VYRRFQDLDE (91 aa)).

Belongs to the NrdR family. The cofactor is Zn(2+).

Negatively regulates transcription of bacterial ribonucleotide reductase nrd genes and operons by binding to NrdR-boxes. This is Transcriptional repressor NrdR from Pseudomonas putida (strain ATCC 700007 / DSM 6899 / JCM 31910 / BCRC 17059 / LMG 24140 / F1).